Here is a 311-residue protein sequence, read N- to C-terminus: Pyrimidine-specific ribonucleoside hydrolase RihA (311 aa).

His-240 is a catalytic residue.

The protein belongs to the IUNH family. RihA subfamily.

In terms of biological role, hydrolyzes cytidine or uridine to ribose and cytosine or uracil, respectively. This chain is Pyrimidine-specific ribonucleoside hydrolase RihA, found in Salmonella agona (strain SL483).